The chain runs to 604 residues: NADP-dependent malic enzyme, mitochondrial (604 aa).

The interval 29 to 50 (APAQGCHSKPGPARPVPLKKRG) is disordered. Tyrosine 137 (proton donor) is an active-site residue. Position 190 (arginine 190) interacts with NAD(+). Lysine 208 (proton acceptor) is an active-site residue. A divalent metal cation-binding residues include glutamate 280, aspartate 281, and aspartate 304. Position 304 (aspartate 304) interacts with NAD(+). Serine 371 bears the Phosphoserine mark. Residue asparagine 443 participates in NAD(+) binding.

The protein belongs to the malic enzymes family. Requires Mg(2+) as cofactor. The cofactor is Mn(2+). Expressed predominantly in organs with a low-division rate.

It is found in the mitochondrion matrix. The catalysed reaction is (S)-malate + NADP(+) = pyruvate + CO2 + NADPH. The enzyme catalyses oxaloacetate + H(+) = pyruvate + CO2. Functionally, catalyzes the oxidative decarboxylation of (S)-malate to pyruvate using NADP(+) as a cofactor. Can also reverse the decarboxylation reaction, but only with significantly lower efficiency. This chain is NADP-dependent malic enzyme, mitochondrial, found in Homo sapiens (Human).